Consider the following 1274-residue polypeptide: Myosin-binding protein C, cardiac-type (1274 aa).

N-acetylmethionine is present on M1. S47 bears the Phosphoserine mark. The span at A107 to A141 shows a compositional bias: low complexity. The interval A107–P153 is disordered. An Ig-like C2-type 1 domain is found at P153–V256. Zn(2+) is bound by residues Q208, H210, E223, and H225. S275, S284, and S304 each carry phosphoserine; by PKA and PKC. S311 and S427 each carry phosphoserine. Ig-like C2-type domains follow at residues S362 to P452, P453 to K543, K544 to E633, and P645 to V771. C436 and C443 are disulfide-bonded. The residue at position 550 (S550) is a Phosphoserine. T607 is modified (phosphothreonine). Fibronectin type-III domains follow at residues A774–P870 and E872–I967. The Ig-like C2-type 6 domain maps to P971–K1065. In terms of domain architecture, Fibronectin type-III 3 spans P1068–P1163. Positions P1181–Q1274 constitute an Ig-like C2-type 7 domain. R1241 carries the post-translational modification Omega-N-methylarginine.

Belongs to the immunoglobulin superfamily. MyBP family. Post-translationally, substrate for phosphorylation by PKA and PKC. Reversible phosphorylation appears to modulate contraction. In terms of processing, polyubiquitinated.

Functionally, thick filament-associated protein located in the crossbridge region of vertebrate striated muscle a bands. In vitro it binds MHC, F-actin and native thin filaments, and modifies the activity of actin-activated myosin ATPase. It may modulate muscle contraction or may play a more structural role. This Homo sapiens (Human) protein is Myosin-binding protein C, cardiac-type (MYBPC3).